The following is a 399-amino-acid chain: Dual-specificity RNA methyltransferase RlmN (399 aa).

E122 functions as the Proton acceptor in the catalytic mechanism. The 244-residue stretch at E128–L371 folds into the Radical SAM core domain. Cysteines 135 and 374 form a disulfide. [4Fe-4S] cluster-binding residues include C142, C146, and C149. Residues G200–E201, S232, S254–H256, and N331 each bind S-adenosyl-L-methionine. C374 acts as the S-methylcysteine intermediate in catalysis.

Belongs to the radical SAM superfamily. RlmN family. The cofactor is [4Fe-4S] cluster.

It is found in the cytoplasm. The enzyme catalyses adenosine(2503) in 23S rRNA + 2 reduced [2Fe-2S]-[ferredoxin] + 2 S-adenosyl-L-methionine = 2-methyladenosine(2503) in 23S rRNA + 5'-deoxyadenosine + L-methionine + 2 oxidized [2Fe-2S]-[ferredoxin] + S-adenosyl-L-homocysteine. It carries out the reaction adenosine(37) in tRNA + 2 reduced [2Fe-2S]-[ferredoxin] + 2 S-adenosyl-L-methionine = 2-methyladenosine(37) in tRNA + 5'-deoxyadenosine + L-methionine + 2 oxidized [2Fe-2S]-[ferredoxin] + S-adenosyl-L-homocysteine. Functionally, specifically methylates position 2 of adenine 2503 in 23S rRNA and position 2 of adenine 37 in tRNAs. m2A2503 modification seems to play a crucial role in the proofreading step occurring at the peptidyl transferase center and thus would serve to optimize ribosomal fidelity. The sequence is that of Dual-specificity RNA methyltransferase RlmN from Rhodopseudomonas palustris (strain HaA2).